Reading from the N-terminus, the 279-residue chain is Lacto-N-neotetraose biosynthesis glycosyltransferase LgtB (279 aa).

The protein belongs to the glycosyltransferase 25 family.

It participates in glycan metabolism; lacto-N-neotetraose biosynthesis. It functions in the pathway bacterial outer membrane biogenesis; lipooligosaccharide biosynthesis. Its function is as follows. Adds the second galactose to the lacto-N-tetraose chain in lipooligosaccharide (LOS). This is Lacto-N-neotetraose biosynthesis glycosyltransferase LgtB (lgtB) from Neisseria meningitidis serogroup A / serotype 4A (strain DSM 15465 / Z2491).